Reading from the N-terminus, the 146-residue chain is MKLHELKPTPGSRHERNRVGRGMATGNGKTSGRGHKGQKARSGGGVRPGFEGGQNPLYRRLPKRGFNNPTRKEYAVVSLDTLNRFEAGTEVTPELLIETGVVSSAKDGIKVLANGKLETKLTVKANKFSGAAKEAIEAAGGTVEVI.

Positions 1-18 are enriched in basic and acidic residues; sequence MKLHELKPTPGSRHERNR. The segment at 1–69 is disordered; the sequence is MKLHELKPTP…RLPKRGFNNP (69 aa). Gly residues predominate over residues 42-52; it reads SGGGVRPGFEG.

Belongs to the universal ribosomal protein uL15 family. In terms of assembly, part of the 50S ribosomal subunit.

In terms of biological role, binds to the 23S rRNA. In Exiguobacterium sp. (strain ATCC BAA-1283 / AT1b), this protein is Large ribosomal subunit protein uL15.